A 438-amino-acid chain; its full sequence is Xanthine permease (438 aa).

The next 13 membrane-spanning stretches (helical) occupy residues 11–31, 41–61, 65–85, 100–120, 121–141, 154–174, 180–200, 220–240, 272–292, 308–328, 331–351, 367–387, and 396–416; these read LGIQ…LIVG, LTYL…LQVW, FFGI…SPMI, IIAS…LVSF, FPPV…MPVA, FGDL…VLLY, FIKS…AYFM, FYFG…IVAI, AEGL…TAFS, VIVV…IAAF, IIPS…VIAY, LLIV…PDIF, and LLTT…NIVY.

The protein belongs to the nucleobase:cation symporter-2 (NCS2) (TC 2.A.40) family.

Its subcellular location is the cell membrane. Its function is as follows. Transport of xanthine in the cell. The chain is Xanthine permease (pbuX) from Bacillus subtilis (strain 168).